The sequence spans 444 residues: Trigger factor (444 aa).

Residues 166–251 (GDQIVIDFKG…VKAVKAPKAA (86 aa)) form the PPIase FKBP-type domain.

Belongs to the FKBP-type PPIase family. Tig subfamily.

It is found in the cytoplasm. The enzyme catalyses [protein]-peptidylproline (omega=180) = [protein]-peptidylproline (omega=0). Its function is as follows. Involved in protein export. Acts as a chaperone by maintaining the newly synthesized protein in an open conformation. Functions as a peptidyl-prolyl cis-trans isomerase. The protein is Trigger factor of Paracoccus denitrificans (strain Pd 1222).